Reading from the N-terminus, the 1406-residue chain is EF-hand calcium-binding domain-containing protein 5 (1406 aa).

Residues 255-655 (NKDLPQQQRD…KACEPKPQHV (401 aa)) are disordered. Composition is skewed to polar residues over residues 258–294 (LPQQ…SLTG), 322–334 (RRSS…QQRG), 342–354 (RRSS…QQRG), 362–373 (RRSSTVEQTRQR), 382–393 (RRSSTVEQTQRR), 402–414 (RRSS…QQRG), 422–434 (RRSS…QQRG), and 442–464 (RRSS…SLPE). Over residues 465-477 (QESHRGSITEGSH) the composition is skewed to basic and acidic residues. Positions 501-513 (DDSGSAGSRRGSG) are enriched in low complexity. Positions 564-577 (QELDEDSTPQLEDD) are enriched in acidic residues. Composition is skewed to basic and acidic residues over residues 578–598 (SALK…EEKP) and 638–655 (SKRD…PQHV). In terms of domain architecture, EF-hand spans 773–808 (RRRILLQAIFEKWDNDGSGFLDLNEVDDLLYTYKEG). The Ca(2+) site is built by aspartate 786, aspartate 788, serine 790, and glutamate 797.

In Mus musculus (Mouse), this protein is EF-hand calcium-binding domain-containing protein 5 (Efcab5).